A 179-amino-acid chain; its full sequence is Large ribosomal subunit protein uL5 (179 aa).

It belongs to the universal ribosomal protein uL5 family. As to quaternary structure, part of the 50S ribosomal subunit; part of the 5S rRNA/L5/L18/L25 subcomplex. Contacts the 5S rRNA and the P site tRNA. Forms a bridge to the 30S subunit in the 70S ribosome.

This is one of the proteins that bind and probably mediate the attachment of the 5S RNA into the large ribosomal subunit, where it forms part of the central protuberance. In the 70S ribosome it contacts protein S13 of the 30S subunit (bridge B1b), connecting the 2 subunits; this bridge is implicated in subunit movement. Contacts the P site tRNA; the 5S rRNA and some of its associated proteins might help stabilize positioning of ribosome-bound tRNAs. The sequence is that of Large ribosomal subunit protein uL5 from Nitratidesulfovibrio vulgaris (strain DSM 19637 / Miyazaki F) (Desulfovibrio vulgaris).